A 161-amino-acid chain; its full sequence is MTLYLVPPLDSADKELPALASKAGVTLLEIEFLHELWPHLSGGQIVIAALNANNLAILNRHMSTLLVELPVAVMAVPGASYRSDWNMIAHALPSEDWITLSNKMLKSGLLANDTVQGEKRSGAEPLSPNVYTDALSRLGIATAHAIPVEPEQPFDVDEVSA.

As to quaternary structure, homodimer. Part of the packaging complex composed of RDRP, P4 and P7. Interacts with RDRP.

It localises to the virion. Functionally, assembly protein part of the packaging complex that packages the viral RNA segments, replicate them into a double-stranded form and transcribe them. Required for efficient procapsid assembly. Necessary for stable packaging. May stabilize the RNA-dependent RNA polymerase (RdRP) in its position at the three-fold axis on the inner side of empty-unexpanded procapsids. Could play a role in viral RNA recognition. Seems to be involved in the regulation of plus strand synthesis (transcription) as a fidelity factor. The sequence is that of Assembly protein P7 (P7) from Pseudomonas phage phi6 (Bacteriophage phi-6).